We begin with the raw amino-acid sequence, 446 residues long: Phosphoglucosamine mutase (446 aa).

Catalysis depends on Ser102, which acts as the Phosphoserine intermediate. 4 residues coordinate Mg(2+): Ser102, Asp241, Asp243, and Asp245. At Ser102 the chain carries Phosphoserine.

This sequence belongs to the phosphohexose mutase family. It depends on Mg(2+) as a cofactor. Post-translationally, activated by phosphorylation.

The enzyme catalyses alpha-D-glucosamine 1-phosphate = D-glucosamine 6-phosphate. Its function is as follows. Catalyzes the conversion of glucosamine-6-phosphate to glucosamine-1-phosphate. This Yersinia enterocolitica serotype O:8 / biotype 1B (strain NCTC 13174 / 8081) protein is Phosphoglucosamine mutase.